Consider the following 193-residue polypeptide: MAAIRKKLVIVGDGACGKTCLLIVFSKDQFPEVYVPTVFENYVADIEVDSKQVELALWDTAGQEDYDRLRPLSYPDTDVILMCFSIDSPDSLENIPEKWTPEVKHFCPNVPIILVGNKKDLRNDEHTRRELTKMKQEPVKAEEGRDMANRIGAFGYMECSAKTKDGVREVFEMATRAALQARRGKKSNKCCLL.

GTP contacts are provided by residues 12 to 19, 30 to 37, 59 to 63, 117 to 120, and 160 to 162; these read GDGACGKT, FPEVYVPT, DTAGQ, NKKD, and SAK. (Microbial infection) O-linked (GlcNAc) tyrosine; by Yersinia Afp18 glycosylation occurs at Y34. Cysteine methyl ester is present on C190. A lipid anchor (S-geranylgeranyl cysteine) is attached at C190. The propeptide at 191-193 is removed in mature form; that stretch reads CLL.

Belongs to the small GTPase superfamily. Rho family. Post-translationally, (Microbial infection) Glycosylated at Tyr-34 by Yersinia ruckeri toxin Afp18. Mono-O-GlcNAcylation by Afp18 inhibits RhoA activation by guanine nucleotide exchange factors and blocks RhoA signaling.

It is found in the cell membrane. Regulates a signal transduction pathway linking plasma membrane receptors to the assembly of focal adhesions and actin stress fibers. The chain is Rho-related GTP-binding protein RhoA-B from Danio rerio (Zebrafish).